The primary structure comprises 398 residues: Probable purine permease 17 (398 aa).

The segment at 1-26 (MEMSKASKQTTRHEESEHVQNPEPDQ) is disordered. The span at 11 to 20 (TRHEESEHVQ) shows a compositional bias: basic and acidic residues. Residue S29 is modified to Phosphoserine. 10 helical membrane-spanning segments follow: residues 43-63 (ISVS…MLLL), 88-108 (WTQA…FFIF), 127-147 (LFFL…LFAL), 155-175 (GIFS…TAII), 183-203 (WIII…PDFG), 219-239 (WLAF…QLGF), 258-278 (VLEM…VGLF), 301-321 (VLSL…MIGL), 332-352 (VVHM…FDFM), and 355-375 (VFSW…GSYF).

This sequence belongs to the purine permeases (TC 2.A.7.14) family.

It is found in the membrane. The sequence is that of Probable purine permease 17 (PUP17) from Arabidopsis thaliana (Mouse-ear cress).